The sequence spans 206 residues: Large ribosomal subunit protein uL4 (206 aa).

A disordered region spans residues 48–97 (THAVKNRSLVSGGGKKPWKQKHTGRARQGSTRASQWVGGGKAMGPKPRDY). Basic residues predominate over residues 63 to 72 (KPWKQKHTGR).

Belongs to the universal ribosomal protein uL4 family. In terms of assembly, part of the 50S ribosomal subunit.

One of the primary rRNA binding proteins, this protein initially binds near the 5'-end of the 23S rRNA. It is important during the early stages of 50S assembly. It makes multiple contacts with different domains of the 23S rRNA in the assembled 50S subunit and ribosome. Its function is as follows. Forms part of the polypeptide exit tunnel. The sequence is that of Large ribosomal subunit protein uL4 from Anaeromyxobacter sp. (strain K).